The chain runs to 383 residues: UDP-N-acetylenolpyruvoylglucosamine reductase (383 aa).

Over residues 1–13 (MRTRRDVPADRSG) the composition is skewed to basic and acidic residues. Residues 1-26 (MRTRRDVPADRSGRSRVSRHPGLSVP) form a disordered region. The region spanning 49 to 215 (LGGPATRLLT…LRVRFELENA (167 aa)) is the FAD-binding PCMH-type domain. R192 is an active-site residue. S271 acts as the Proton donor in catalysis. E375 is a catalytic residue.

The protein belongs to the MurB family. The cofactor is FAD.

It localises to the cytoplasm. It carries out the reaction UDP-N-acetyl-alpha-D-muramate + NADP(+) = UDP-N-acetyl-3-O-(1-carboxyvinyl)-alpha-D-glucosamine + NADPH + H(+). Its pathway is cell wall biogenesis; peptidoglycan biosynthesis. Functionally, cell wall formation. The chain is UDP-N-acetylenolpyruvoylglucosamine reductase from Streptomyces coelicolor (strain ATCC BAA-471 / A3(2) / M145).